Consider the following 161-residue polypeptide: 2-C-methyl-D-erythritol 2,4-cyclodiphosphate synthase (161 aa).

2 residues coordinate a divalent metal cation: Asp-10 and His-12. Residues 10–12 and 36–37 each bind 4-CDP-2-C-methyl-D-erythritol 2-phosphate; these read DVH and HS. His-44 is a binding site for a divalent metal cation. Residues 58 to 60, 63 to 67, and Arg-144 contribute to the 4-CDP-2-C-methyl-D-erythritol 2-phosphate site; these read DIG and FSDTD.

It belongs to the IspF family. Homotrimer. Requires a divalent metal cation as cofactor.

The enzyme catalyses 4-CDP-2-C-methyl-D-erythritol 2-phosphate = 2-C-methyl-D-erythritol 2,4-cyclic diphosphate + CMP. The protein operates within isoprenoid biosynthesis; isopentenyl diphosphate biosynthesis via DXP pathway; isopentenyl diphosphate from 1-deoxy-D-xylulose 5-phosphate: step 4/6. Its function is as follows. Involved in the biosynthesis of isopentenyl diphosphate (IPP) and dimethylallyl diphosphate (DMAPP), two major building blocks of isoprenoid compounds. Catalyzes the conversion of 4-diphosphocytidyl-2-C-methyl-D-erythritol 2-phosphate (CDP-ME2P) to 2-C-methyl-D-erythritol 2,4-cyclodiphosphate (ME-CPP) with a corresponding release of cytidine 5-monophosphate (CMP). This is 2-C-methyl-D-erythritol 2,4-cyclodiphosphate synthase from Burkholderia ambifaria (strain MC40-6).